The chain runs to 82 residues: Small ribosomal subunit protein bS16 (82 aa).

The protein belongs to the bacterial ribosomal protein bS16 family.

The polypeptide is Small ribosomal subunit protein bS16 (Crocosphaera subtropica (strain ATCC 51142 / BH68) (Cyanothece sp. (strain ATCC 51142))).